The primary structure comprises 424 residues: Tyrosine--tRNA ligase (424 aa).

Position 37 (tyrosine 37) interacts with L-tyrosine. Residues 42–51 (ITADSLHVGH) carry the 'HIGH' region motif. L-tyrosine is bound by residues tyrosine 175 and glutamine 179. A 'KMSKS' region motif is present at residues 235–239 (KFGKT). Lysine 238 lines the ATP pocket. The S4 RNA-binding domain occupies 356 to 414 (GNLQQLLVYSRLALSRSHAKSMIVSNSVRINNIIQNNPFYILCNRDKMYHKYTLLSRGK).

The protein belongs to the class-I aminoacyl-tRNA synthetase family. TyrS type 1 subfamily. Homodimer.

The protein localises to the cytoplasm. The catalysed reaction is tRNA(Tyr) + L-tyrosine + ATP = L-tyrosyl-tRNA(Tyr) + AMP + diphosphate + H(+). Functionally, catalyzes the attachment of tyrosine to tRNA(Tyr) in a two-step reaction: tyrosine is first activated by ATP to form Tyr-AMP and then transferred to the acceptor end of tRNA(Tyr). The protein is Tyrosine--tRNA ligase of Buchnera aphidicola subsp. Baizongia pistaciae (strain Bp).